Here is a 245-residue protein sequence, read N- to C-terminus: MIIPSLDFIHGKIVRLYQGNYNNKISYKKDIFKQIEKYIYQGATYIHLVDLDGCNNPENRQKSMFNIFSNFKNVSFQVGGGIRSKRDIENLFHAGVSKIVIGTSAILYPNKFKKWLKNYGSKNFVLSVDININTKKENKIAIQGWKKTTEINLDDAIKQFIPYGLKNILCTDISRDGTFSGPNISLYKYLKNKFPNIVLQSSGGINSISDIYNLKKNNVEHVIVGRALLENKFTFLEASKCWLKE.

D7 serves as the catalytic Proton acceptor. The active-site Proton donor is D129.

The protein belongs to the HisA/HisF family.

It localises to the cytoplasm. The catalysed reaction is 1-(5-phospho-beta-D-ribosyl)-5-[(5-phospho-beta-D-ribosylamino)methylideneamino]imidazole-4-carboxamide = 5-[(5-phospho-1-deoxy-D-ribulos-1-ylimino)methylamino]-1-(5-phospho-beta-D-ribosyl)imidazole-4-carboxamide. It functions in the pathway amino-acid biosynthesis; L-histidine biosynthesis; L-histidine from 5-phospho-alpha-D-ribose 1-diphosphate: step 4/9. This chain is 1-(5-phosphoribosyl)-5-[(5-phosphoribosylamino)methylideneamino] imidazole-4-carboxamide isomerase, found in Buchnera aphidicola subsp. Cinara cedri (strain Cc).